We begin with the raw amino-acid sequence, 55 residues long: MAKPASIKIKLESTADTGYFYVTKKNSRTMTEKMVIKKYDPIARKHVEFKETKIK.

It belongs to the bacterial ribosomal protein bL33 family.

The protein is Large ribosomal subunit protein bL33 of Parvibaculum lavamentivorans (strain DS-1 / DSM 13023 / NCIMB 13966).